We begin with the raw amino-acid sequence, 389 residues long: Meiosis-specific protein MEI4 (389 aa).

The interaction with REC114 stretch occupies residues 1–127 (MDIQPWYLKT…LSQHFVESTD (127 aa)).

The protein belongs to the MEI4L family. Part of the MCD recombinosome complex, at least composed of IHO1, REC114 and MEI4. Forms a complex with REC114; the interaction is required for MEI4 stability. Interacts (via N-terminal domain) with REC114 (via C-terminal domain). Interacts with IHO1. In terms of tissue distribution, expressed in adult testis and brain and in embryonic ovary.

Its subcellular location is the chromosome. Its function is as follows. Required for DNA double-strand breaks (DSBs) formation in unsynapsed regions during meiotic recombination. Probably acts by forming a complex with IHO1 and REC114, which activates DSBs formation in unsynapsed regions, an essential step to ensure completion of synapsis. This is Meiosis-specific protein MEI4 from Mus musculus (Mouse).